The chain runs to 377 residues: NADP-dependent oxidoreductase lnbE (377 aa).

NADP(+)-binding positions include 170-173 (GGNG), 257-263 (LTNPRVS), and 293-295 (SPV).

It belongs to the NADP-dependent oxidoreductase L4BD family.

Its pathway is secondary metabolite biosynthesis. In terms of biological role, NADP-dependent oxidoreductase; part of the lnb gene cluster that mediates the biosynthesis of diastereomeric piperazines. Lna and lnb clusters encode sets of enzymes that produce overlapping sets of previously undescribed metabolites such as piperazinomycin-like metabolites or morpholine. The lna and lnb biosynthetic pathways appear to be part of a signaling network that controls the formation of sclerotia, a resilient overwintering structure. One primary function of the non-canonical nonribosomal peptide synthetases lnaA and lnbA consists in the reduction of L-tyrosine. The presence in the clusters of tailoring enzymes such as the oxidoreductases lnaB, lnbB, lnaE or lnbE, as well as of the cytochrome P450 monooxygenases lnaC, lnaD, or lnbC, might explain formation of various diastereomeric piperazines. This Aspergillus flavus (strain ATCC 200026 / FGSC A1120 / IAM 13836 / NRRL 3357 / JCM 12722 / SRRC 167) protein is NADP-dependent oxidoreductase lnbE.